The primary structure comprises 533 residues: MYLIFLLFFAASYSMSLSSADSVTIYEDFVQCFKNVTTISDIDLSDVVLPRTSISFTPTLRAYIRNARFNTSSMPKPSIIIVPRVDSHVQAAVICAKTLNLQLKIRSGGHDYDGLSYVSAVTFLVLDLSNFRNITVDLNDGGGSAWVQTGATLGELYYRIWEKSEVHAFPAGVCPTVGVGGHVSGGGYGHMIRKFGLTIDHVVDATIVDANGQIHDRKSMEEDLFWAIRGGGGGSFGVVLAFKVKLVTVPKTVTVFRVDKSVDENALDMVYKWQFVAPRTDPGLFMRVLLSSPTQNKTSTVNTKLRALYLGKADDVVLKMAEEFPELGLKKEDCKEMTWIQSLLWWMNHVDVDKVKPEILLEREPDSAKFLKRKSDYVEKEMTKPELNRLFQKLATLDRTGLVLNPYGGSLNVTAVNATAFPHRHKLYKIQHSVTWPDAGPEAERLYIGNLRTTYNIMTPFVSKNPRSSYLNYRDIDIGVNDHGADGYRKGEIYGRKYFGENFDRLVRVKTAVDPDNFFRNEQSIPTLPPNRR.

The N-terminal stretch at M1–A20 is a signal peptide. Cysteines 32 and 95 form a disulfide. 6 N-linked (GlcNAc...) asparagine glycosylation sites follow: N35, N70, N133, N296, N412, and N417. The FAD-binding PCMH-type domain maps to S73–V249. A cross-link (6-(S-cysteinyl)-8alpha-(pros-histidyl)-FAD (His-Cys)) is located at residues H110–C174.

This sequence belongs to the oxygen-dependent FAD-linked oxidoreductase family. FAD is required as a cofactor. Post-translationally, the FAD cofactor is bound via a bicovalent 6-S-cysteinyl, 8alpha-N1-histidyl FAD linkage.

Its subcellular location is the secreted. It is found in the cell wall. The sequence is that of Berberine bridge enzyme-like 12 from Arabidopsis thaliana (Mouse-ear cress).